The primary structure comprises 110 residues: Probable ribonuclease HepT (110 aa).

Active-site residues include Arg-75 and His-80. Residues 75–82 (RDKLIHAY) carry the RX(4)HXY motif motif. Position 82 is an O-di-AMP-tyrosine (Tyr-82).

This sequence belongs to the HepT RNase toxin family. In terms of processing, modified by cognate antitoxin MntA; probably at least 2 successive AMPylation events occur on Tyr-82.

Functionally, toxic component of a type VII toxin-antitoxin (TA) system. Overexpression in E.coli inhibits cell growth. Neutralized by cognate antitoxin MntA. Neutralization is probably due to AMPylation by MntA. Probably an RNAase. This chain is Probable ribonuclease HepT, found in Thermococcus cleftensis (strain DSM 27260 / KACC 17922 / CL1).